A 224-amino-acid chain; its full sequence is Phosphoglycolate phosphatase (224 aa).

Residue D11 is the Nucleophile of the active site. Positions 11, 13, and 177 each coordinate Mg(2+).

Belongs to the HAD-like hydrolase superfamily. CbbY/CbbZ/Gph/YieH family. The cofactor is Mg(2+).

It carries out the reaction 2-phosphoglycolate + H2O = glycolate + phosphate. Its pathway is organic acid metabolism; glycolate biosynthesis; glycolate from 2-phosphoglycolate: step 1/1. Functionally, specifically catalyzes the dephosphorylation of 2-phosphoglycolate. Is involved in the dissimilation of the intracellular 2-phosphoglycolate formed during the DNA repair of 3'-phosphoglycolate ends, a major class of DNA lesions induced by oxidative stress. The protein is Phosphoglycolate phosphatase of Haemophilus influenzae (strain 86-028NP).